Here is a 596-residue protein sequence, read N- to C-terminus: Elongation factor 4 (596 aa).

In terms of domain architecture, tr-type G spans 2 to 184 (KHIRNFSIIA…VIVEQIPPPE (183 aa)). Residues 14-19 (DHGKST) and 131-134 (NKID) each bind GTP.

It belongs to the TRAFAC class translation factor GTPase superfamily. Classic translation factor GTPase family. LepA subfamily.

The protein localises to the cell inner membrane. The catalysed reaction is GTP + H2O = GDP + phosphate + H(+). Required for accurate and efficient protein synthesis under certain stress conditions. May act as a fidelity factor of the translation reaction, by catalyzing a one-codon backward translocation of tRNAs on improperly translocated ribosomes. Back-translocation proceeds from a post-translocation (POST) complex to a pre-translocation (PRE) complex, thus giving elongation factor G a second chance to translocate the tRNAs correctly. Binds to ribosomes in a GTP-dependent manner. The sequence is that of Elongation factor 4 from Shewanella piezotolerans (strain WP3 / JCM 13877).